Reading from the N-terminus, the 241-residue chain is RAD9, HUS1, RAD1-interacting nuclear orphan protein 1 (241 aa).

Residues 1-10 (MPPRKKRRQA) show a composition bias toward basic residues. The segment at 1-27 (MPPRKKRRQAAQKPQLLFHQQPLEAPK) is disordered. The RAD1-binding motif motif lies at 56 to 62 (SWVSPQF). 2 disordered regions span residues 68–134 (SWFP…PLVP) and 157–204 (IPPD…LVTD). The segment covering 72–87 (GKRKHHHRDHARRSSR) has biased composition (basic residues). Polar residues predominate over residues 100-110 (ETPQSSASSAT). The D-box signature appears at 129–136 (GRPLVPML). The KEN box signature appears at 177–181 (LRENS). Polar residues predominate over residues 181 to 193 (SLPSCSLHTSTPK).

In terms of assembly, interacts (when phosphorylated by PLK1) with POLQ; promoting POLQ recruitment to DNA damage sites. Interacts with RAD1; interaction is direct and promotes association with the 9-1-1 (RAD9-RAD1-HUS1) complex. Interacts with RAD18. Interacts with TOPBP1. Interacts with UBE2N. Post-translationally, phosphorylated by PLK1, promoting interaction with polymerase theta (POLQ). Ubiquitinated and degraded by the APC/C complex upon mitotic exit.

It localises to the nucleus. The protein localises to the chromosome. In terms of biological role, involved in microhomology-mediated end-joining (MMEJ) DNA repair by promoting recruitment of polymerase theta (POLQ) to DNA damage sites during mitosis. MMEJ is an alternative non-homologous end-joining (NHEJ) machinery that takes place during mitosis to repair double-strand breaks in DNA that originate in S-phase. Accumulates in M-phase; following phosphorylation by PLK1, interacts with POLQ, enabling its recruitment to double-strand breaks for subsequent repair. Also involved in the DNA damage response (DDR) signaling in response to genotoxic stresses such as ionizing radiation (IR) during the S phase. Recruited to sites of DNA damage through interaction with the 9-1-1 cell-cycle checkpoint response complex and TOPBP1 in a ATR-dependent manner. Required for the progression of the G1 to S phase transition. Plays a role in the stimulation of CHEK1 phosphorylation. The sequence is that of RAD9, HUS1, RAD1-interacting nuclear orphan protein 1 (RHNO1) from Bos taurus (Bovine).